A 396-amino-acid polypeptide reads, in one-letter code: Elongation factor Tu (396 aa).

A tr-type G domain is found at 10-206 (KPHVNVGTIG…ALDSYIPTPE (197 aa)). The G1 stretch occupies residues 19-26 (GHVDHGKT). A GTP-binding site is contributed by 19-26 (GHVDHGKT). T26 is a Mg(2+) binding site. Residues 60-64 (GITIN) are G2. Residues 81 to 84 (DCPG) form a G3 region. Residues 81-85 (DCPGH) and 136-139 (NKCD) each bind GTP. A G4 region spans residues 136 to 139 (NKCD). Residues 174–176 (SAK) are G5.

Belongs to the TRAFAC class translation factor GTPase superfamily. Classic translation factor GTPase family. EF-Tu/EF-1A subfamily. Monomer.

The protein resides in the cytoplasm. It catalyses the reaction GTP + H2O = GDP + phosphate + H(+). Its function is as follows. GTP hydrolase that promotes the GTP-dependent binding of aminoacyl-tRNA to the A-site of ribosomes during protein biosynthesis. The sequence is that of Elongation factor Tu from Ralstonia nicotianae (strain ATCC BAA-1114 / GMI1000) (Ralstonia solanacearum).